The sequence spans 134 residues: ATP synthase epsilon chain (134 aa).

This sequence belongs to the ATPase epsilon chain family. As to quaternary structure, F-type ATPases have 2 components, CF(1) - the catalytic core - and CF(0) - the membrane proton channel. CF(1) has five subunits: alpha(3), beta(3), gamma(1), delta(1), epsilon(1). CF(0) has three main subunits: a, b and c.

The protein localises to the cell membrane. Its function is as follows. Produces ATP from ADP in the presence of a proton gradient across the membrane. The sequence is that of ATP synthase epsilon chain (atpC) from Priestia megaterium (strain ATCC 12872 / QMB1551) (Bacillus megaterium).